The following is a 328-amino-acid chain: DNA polymerase III subunit delta' (328 aa).

In terms of assembly, DNA polymerase III contains a core (composed of alpha, epsilon and theta chains) that associates with a tau subunit. This core dimerizes to form the POLIII' complex. PolIII' associates with the gamma complex (composed of gamma, delta, delta', psi and chi chains) and with the beta chain to form the complete DNA polymerase III complex.

It carries out the reaction DNA(n) + a 2'-deoxyribonucleoside 5'-triphosphate = DNA(n+1) + diphosphate. Its function is as follows. DNA polymerase III is a complex, multichain enzyme responsible for most of the replicative synthesis in bacteria. This DNA polymerase also exhibits 3' to 5' exonuclease activity. The sequence is that of DNA polymerase III subunit delta' (holB) from Buchnera aphidicola subsp. Schizaphis graminum (strain Sg).